A 358-amino-acid chain; its full sequence is DNA replication and repair protein RecF (358 aa).

An ATP-binding site is contributed by 30–37 (GNNGSGKT).

This sequence belongs to the RecF family.

It localises to the cytoplasm. Its function is as follows. The RecF protein is involved in DNA metabolism; it is required for DNA replication and normal SOS inducibility. RecF binds preferentially to single-stranded, linear DNA. It also seems to bind ATP. The chain is DNA replication and repair protein RecF from Histophilus somni (strain 129Pt) (Haemophilus somnus).